We begin with the raw amino-acid sequence, 44 residues long: Photosystem II reaction center protein K (44 aa).

A propeptide spanning residues 1–7 is cleaved from the precursor; that stretch reads MTTLLLA. Residues 19-39 traverse the membrane as a helical segment; the sequence is IVDVLPVIPLLFLLLAFVWQA.

It belongs to the PsbK family. In terms of assembly, PSII is composed of 1 copy each of membrane proteins PsbA, PsbB, PsbC, PsbD, PsbE, PsbF, PsbH, PsbI, PsbJ, PsbK, PsbL, PsbM, PsbT, PsbX, PsbY, PsbZ, Psb30/Ycf12, at least 3 peripheral proteins of the oxygen-evolving complex and a large number of cofactors. It forms dimeric complexes.

The protein localises to the plastid. It localises to the chloroplast thylakoid membrane. Functionally, one of the components of the core complex of photosystem II (PSII). PSII is a light-driven water:plastoquinone oxidoreductase that uses light energy to abstract electrons from H(2)O, generating O(2) and a proton gradient subsequently used for ATP formation. It consists of a core antenna complex that captures photons, and an electron transfer chain that converts photonic excitation into a charge separation. The sequence is that of Photosystem II reaction center protein K from Tupiella akineta (Green alga).